Consider the following 397-residue polypeptide: 1-deoxy-D-xylulose 5-phosphate reductoisomerase (397 aa).

NADPH-binding residues include Thr-12, Gly-13, Ser-14, Ile-15, Gly-38, Lys-39, Asn-40, and Asn-126. Lys-127 lines the 1-deoxy-D-xylulose 5-phosphate pocket. Glu-128 is an NADPH binding site. Residue Asp-152 coordinates Mn(2+). 1-deoxy-D-xylulose 5-phosphate-binding residues include Ser-153, Glu-154, Ser-188, and His-211. Glu-154 lines the Mn(2+) pocket. Gly-217 serves as a coordination point for NADPH. The 1-deoxy-D-xylulose 5-phosphate site is built by Ser-224, Asn-229, Lys-230, and Glu-233. Residue Glu-233 participates in Mn(2+) binding.

This sequence belongs to the DXR family. Mg(2+) is required as a cofactor. The cofactor is Mn(2+).

It catalyses the reaction 2-C-methyl-D-erythritol 4-phosphate + NADP(+) = 1-deoxy-D-xylulose 5-phosphate + NADPH + H(+). It participates in isoprenoid biosynthesis; isopentenyl diphosphate biosynthesis via DXP pathway; isopentenyl diphosphate from 1-deoxy-D-xylulose 5-phosphate: step 1/6. Catalyzes the NADPH-dependent rearrangement and reduction of 1-deoxy-D-xylulose-5-phosphate (DXP) to 2-C-methyl-D-erythritol 4-phosphate (MEP). This is 1-deoxy-D-xylulose 5-phosphate reductoisomerase from Haemophilus influenzae (strain PittEE).